The primary structure comprises 4388 residues: Intermembrane lipid transfer protein VPS13D (4388 aa).

The Chorein N-terminal domain maps to 2–115 (LEGLVAWVLN…ERERKKALLQ (114 aa)). At S663 the chain carries Phosphoserine. The segment at 745–796 (QDNSRRKSRDGSASEETQFSDDEYKTPLATPPNTPPPESSSSNGEKTPPFSG) is disordered. Basic and acidic residues predominate over residues 747-756 (NSRRKSRDGS). The span at 773 to 782 (ATPPNTPPPE) shows a compositional bias: pro residues. Phosphoserine occurs at positions 1034, 1038, 1042, 1138, and 1341. The segment at 1563-1582 (ASATSSPCPDSPLPPLSTCG) is disordered. Phosphoserine is present on residues S1598, S1603, and S1699. Disordered stretches follow at residues 1741 to 1771 (RPTS…VDEP), 2070 to 2108 (QDKE…QFTM), and 2122 to 2145 (FVPS…ESSS). T1761 is subject to Phosphothreonine. Phosphoserine is present on S1765. The segment covering 2123–2144 (VPSTSTKQQGPQPTLSVGQESS) has biased composition (polar residues). Residues S2435, S2671, S2861, S2864, and S2983 each carry the phosphoserine modification. The UBA domain occupies 2633–2676 (TLDPVLELQLARLQELGFSMDDCRKALLACQGQLKKAASWLFKN). The region spanning 3276–3558 (LKIFISAPYW…LDYAWDEPTL (283 aa)) is the SHR-BD domain. N6-acetyllysine is present on K3524.

Belongs to the VPS13 family. In terms of tissue distribution, widely expressed.

Its function is as follows. Mediates the transfer of lipids between membranes at organelle contact sites. Functions in promoting mitochondrial clearance by mitochondrial autophagy (mitophagy), also possibly by positively regulating mitochondrial fission. Mitophagy plays an important role in regulating cell health and mitochondrial size and homeostasis. In Homo sapiens (Human), this protein is Intermembrane lipid transfer protein VPS13D.